We begin with the raw amino-acid sequence, 421 residues long: Acylglycerol kinase, mitochondrial (421 aa).

Lysine 6 is subject to N6-acetyllysine. The interval 15–31 is hydrophobic; that stretch reads TTAGLCLLTWGGHWLYG. The DAGKc domain occupies 58 to 199; that stretch reads AQVKKATVFL…LDVLQIKGEK (142 aa). Residues 252 to 271 are disordered; it reads ISYTGPRERPPIEPEETPPR.

Belongs to the AGK family. Component of the TIM22 complex, which core is composed of TIMM22, associated with TIMM10 (TIMM10A and/or TIMM10B), TIMM9, AGK and TIMM29. Interacts with SMIM26. It depends on Mg(2+) as a cofactor. In terms of tissue distribution, ubiquitously expressed.

The protein localises to the mitochondrion inner membrane. It is found in the mitochondrion intermembrane space. The catalysed reaction is a monoacylglycerol + ATP = a monoacyl-sn-glycero-3-phosphate + ADP + H(+). It carries out the reaction a 1,2-diacyl-sn-glycerol + ATP = a 1,2-diacyl-sn-glycero-3-phosphate + ADP + H(+). The enzyme catalyses an N-acylsphing-4-enine + ATP = an N-acylsphing-4-enine 1-phosphate + ADP + H(+). It catalyses the reaction 1,2-di-(9Z-octadecenoyl)-sn-glycerol + ATP = 1,2-di-(9Z-octadecenoyl)-sn-glycero-3-phosphate + ADP + H(+). The catalysed reaction is 1-(9Z-octadecenoyl)-sn-glycerol + ATP = 1-(9Z-octadecenoyl)-sn-glycero-3-phosphate + ADP + H(+). It carries out the reaction 1-(5Z,8Z,11Z,14Z-eicosatetraenoyl)-sn-glycerol + ATP = 1-(5Z,8Z,11Z,14Z-eicosatetraenoyl)-sn-glycero-3-phosphate + ADP + H(+). The enzyme catalyses a 1-acyl-sn-glycerol + ATP = a 1-acyl-sn-glycero-3-phosphate + ADP + H(+). It catalyses the reaction 1-hexadecanoyl-sn-glycerol + ATP = 1-hexadecanoyl-sn-glycero-3-phosphate + ADP + H(+). The catalysed reaction is a 2-acylglycerol + ATP = a 2-acyl-sn-glycerol 3-phosphate + ADP + H(+). It carries out the reaction 2-(5Z,8Z,11Z,14Z-eicosatetraenoyl)-glycerol + ATP = 2-(5Z,8Z,11Z,14Z-eicosatetraenoyl)-sn-glycero-3-phosphate + ADP + H(+). The enzyme catalyses N-(hexanoyl)sphing-4-enine + ATP = N-hexanoylsphing-4-enine 1-phosphate + ADP + H(+). Its pathway is lipid metabolism; glycerolipid metabolism. Its activity is regulated as follows. Both the ceramide and diacylglycerol kinase activities are inhibited by sphingosine and stimulated by cardiolipin. Both activities are stimulated by calcium when magnesium concentrations are low but inhibited by calcium when magnesium concentrations are high. In terms of biological role, lipid kinase that can phosphorylate both monoacylglycerol and diacylglycerol to form lysophosphatidic acid (LPA) and phosphatidic acid (PA), respectively. Phosphorylates ceramide but not sphingosine. Phosphorylates 1,2-dioleoylglycerol more rapidly than 2,3-dioleoylglycerol. Independently of its lipid kinase activity, acts as a component of the TIM22 complex. The TIM22 complex mediates the import and insertion of multi-pass transmembrane proteins into the mitochondrial inner membrane by forming a twin-pore translocase that uses the membrane potential as the external driving force. In the TIM22 complex, required for the import of a subset of metabolite carriers into mitochondria, such as ANT1/SLC25A4 and SLC25A24, while it is not required for the import of TIMM23. Overexpression increases the formation and secretion of LPA, resulting in transactivation of EGFR and activation of the downstream MAPK signaling pathway, leading to increased cell growth. In Mus musculus (Mouse), this protein is Acylglycerol kinase, mitochondrial.